We begin with the raw amino-acid sequence, 1006 residues long: Pleckstrin homology domain-containing family G member 5 (1006 aa).

Disordered regions lie at residues M1–D71, P148–A198, and E212–W242. Acidic residues predominate over residues D36–S45. Composition is skewed to basic and acidic residues over residues P151–K165 and E183–L194. Over residues S224–W242 the composition is skewed to low complexity. The region spanning H336 to C528 is the DH domain. A PH domain is found at Q584 to N684. 3 disordered regions span residues R690–G754, D768–G820, and A837–P863. Positions L704–D726 are enriched in acidic residues. Polar residues-rich tracts occupy residues S727–G754 and T769–D785. Position 729 is a phosphothreonine (T729). S734 bears the Phosphoserine mark. The span at E786 to L803 shows a compositional bias: low complexity. Over residues P847–P856 the composition is skewed to pro residues. S851, S876, and S881 each carry phosphoserine. The tract at residues A950–Q979 is disordered.

In terms of assembly, interacts with GIPC1/synectin and RHOA. As to expression, predominantly expressed in the peripheral nervous system and brain. Highest expression is observed in heart, lung, kidney, testis and moderate expression is present in spleen, pancreas, skeletal muscle, ovary and liver. Weakly expressed in glioblastoma (GBM) cell lines.

It is found in the cytoplasm. It localises to the perinuclear region. Its subcellular location is the cell membrane. The protein resides in the cell junction. The protein localises to the cell projection. It is found in the lamellipodium. In terms of biological role, functions as a guanine exchange factor (GEF) for RAB26 and thus regulates autophagy of synaptic vesicles in axon terminal of motoneurons. Involved in the control of neuronal cell differentiation. Plays a role in angiogenesis through regulation of endothelial cells chemotaxis. Also affects the migration, adhesion, and matrix/bone degradation in macrophages and osteoclasts. The protein is Pleckstrin homology domain-containing family G member 5 (PLEKHG5) of Homo sapiens (Human).